The chain runs to 142 residues: Ninjurin-2 (142 aa).

The disordered stretch occupies residues 1-21 (MESARENIDLQPGSSDPRSQP). Residues 1–60 (MESARENIDLQPGSSDPRSQPINLNHYATKKSVAESMLDVALFMSNAMRLKAVLEQGPSS) lie on the Extracellular side of the membrane. Over residues 12-21 (PGSSDPRSQP) the composition is skewed to polar residues. Residues 25–37 (NHYATKKSVAESM) are helix alpha1. Residues 38-57 (LDVALFMSNAMRLKAVLEQG) are helix alpha2. A helical transmembrane segment spans residues 61 to 92 (HYYTTLVTLISLSLLLQVVIGVLLVVIARLNL). The Cytoplasmic portion of the chain corresponds to 93–96 (NEVE). Residues 97–126 (KQWRLNQLNNAATILVFFTVVINVFITAFG) form a helical membrane-spanning segment. Gln103 serves as a coordination point for cholesterol. Residues 127–142 (AHKTGFLAARASRNPL) are Extracellular-facing.

It belongs to the ninjurin family. In terms of assembly, homooligomer; in response to stimuli, homooligomerizes into filaments. In contrast to NINJ1, the filament is curved toward the intracellular space, preventing its circularization on a relatively flat membrane to mediate plasma membrane rupture: curvature is caused by cholesterol-binding at the cytoplasmic leaflet. In terms of tissue distribution, widely expressed. In adult, higher expression in the bone marrow and peripheral blood lymphocytes, medium in the lung, lymph node, thyroid, uterus, thymus, spleen, prostate and skeletal muscle, lower in the liver, placenta, brain, heart and kidney. In embryo, higher expression in the thymus, heart and liver, lower in the spleen, lung, brain and kidney.

Its subcellular location is the cell membrane. In terms of biological role, its role in unclear. In contrast to NINJ1 paralog, does not mediate plasma membrane rupture (cytolysis) downstream of necroptotic and pyroptotic programmed cell death. While it is able to oligomerize and form filaments, filaments are curved toward the intracellular space, preventing circularization to mediate plasma membrane rupture. May act as a homophilic transmembrane adhesion molecule involved in nerve regeneration. Promotes axonal growth. The sequence is that of Ninjurin-2 from Homo sapiens (Human).